Here is a 306-residue protein sequence, read N- to C-terminus: Homoserine O-succinyltransferase (306 aa).

Cys142 acts as the Acyl-thioester intermediate in catalysis. Positions 163 and 192 each coordinate substrate. His233 (proton acceptor) is an active-site residue. The active site involves Glu235. Arg247 provides a ligand contact to substrate.

It belongs to the MetA family.

It is found in the cytoplasm. It carries out the reaction L-homoserine + succinyl-CoA = O-succinyl-L-homoserine + CoA. It functions in the pathway amino-acid biosynthesis; L-methionine biosynthesis via de novo pathway; O-succinyl-L-homoserine from L-homoserine: step 1/1. Its function is as follows. Transfers a succinyl group from succinyl-CoA to L-homoserine, forming succinyl-L-homoserine. This Pelagibacterium halotolerans (strain DSM 22347 / JCM 15775 / CGMCC 1.7692 / B2) protein is Homoserine O-succinyltransferase.